The following is a 302-amino-acid chain: 4-hydroxy-tetrahydrodipicolinate synthase (302 aa).

T46 is a binding site for pyruvate. Y134 serves as the catalytic Proton donor/acceptor. Residue K162 is the Schiff-base intermediate with substrate of the active site. Residue I204 coordinates pyruvate.

This sequence belongs to the DapA family. As to quaternary structure, homotetramer; dimer of dimers.

The protein localises to the cytoplasm. The catalysed reaction is L-aspartate 4-semialdehyde + pyruvate = (2S,4S)-4-hydroxy-2,3,4,5-tetrahydrodipicolinate + H2O + H(+). It functions in the pathway amino-acid biosynthesis; L-lysine biosynthesis via DAP pathway; (S)-tetrahydrodipicolinate from L-aspartate: step 3/4. Catalyzes the condensation of (S)-aspartate-beta-semialdehyde [(S)-ASA] and pyruvate to 4-hydroxy-tetrahydrodipicolinate (HTPA). In Xanthomonas axonopodis pv. citri (strain 306), this protein is 4-hydroxy-tetrahydrodipicolinate synthase.